Here is a 74-residue protein sequence, read N- to C-terminus: Protein SlyX homolog (74 aa).

It belongs to the SlyX family.

This Aliivibrio salmonicida (strain LFI1238) (Vibrio salmonicida (strain LFI1238)) protein is Protein SlyX homolog.